Consider the following 274-residue polypeptide: 2,3,4,5-tetrahydropyridine-2,6-dicarboxylate N-succinyltransferase (274 aa).

Residues R104 and D141 each coordinate substrate.

Belongs to the transferase hexapeptide repeat family. Homotrimer.

Its subcellular location is the cytoplasm. It catalyses the reaction (S)-2,3,4,5-tetrahydrodipicolinate + succinyl-CoA + H2O = (S)-2-succinylamino-6-oxoheptanedioate + CoA. The protein operates within amino-acid biosynthesis; L-lysine biosynthesis via DAP pathway; LL-2,6-diaminopimelate from (S)-tetrahydrodipicolinate (succinylase route): step 1/3. The protein is 2,3,4,5-tetrahydropyridine-2,6-dicarboxylate N-succinyltransferase of Shewanella oneidensis (strain ATCC 700550 / JCM 31522 / CIP 106686 / LMG 19005 / NCIMB 14063 / MR-1).